The primary structure comprises 688 residues: Glycine--tRNA ligase beta subunit (688 aa).

Belongs to the class-II aminoacyl-tRNA synthetase family. Tetramer of two alpha and two beta subunits.

It is found in the cytoplasm. It catalyses the reaction tRNA(Gly) + glycine + ATP = glycyl-tRNA(Gly) + AMP + diphosphate. The protein is Glycine--tRNA ligase beta subunit of Chromohalobacter salexigens (strain ATCC BAA-138 / DSM 3043 / CIP 106854 / NCIMB 13768 / 1H11).